Here is a 149-residue protein sequence, read N- to C-terminus: D-aminoacyl-tRNA deacylase (149 aa).

Residues G137–P138 carry the Gly-cisPro motif, important for rejection of L-amino acids motif.

Belongs to the DTD family. Homodimer.

Its subcellular location is the cytoplasm. The catalysed reaction is glycyl-tRNA(Ala) + H2O = tRNA(Ala) + glycine + H(+). It catalyses the reaction a D-aminoacyl-tRNA + H2O = a tRNA + a D-alpha-amino acid + H(+). An aminoacyl-tRNA editing enzyme that deacylates mischarged D-aminoacyl-tRNAs. Also deacylates mischarged glycyl-tRNA(Ala), protecting cells against glycine mischarging by AlaRS. Acts via tRNA-based rather than protein-based catalysis; rejects L-amino acids rather than detecting D-amino acids in the active site. By recycling D-aminoacyl-tRNA to D-amino acids and free tRNA molecules, this enzyme counteracts the toxicity associated with the formation of D-aminoacyl-tRNA entities in vivo and helps enforce protein L-homochirality. This chain is D-aminoacyl-tRNA deacylase, found in Caldicellulosiruptor bescii (strain ATCC BAA-1888 / DSM 6725 / KCTC 15123 / Z-1320) (Anaerocellum thermophilum).